The sequence spans 138 residues: Large ribosomal subunit protein uL16c (138 aa).

It belongs to the universal ribosomal protein uL16 family. As to quaternary structure, part of the 50S ribosomal subunit.

The protein resides in the plastid. The protein localises to the chloroplast. The polypeptide is Large ribosomal subunit protein uL16c (Physcomitrium patens (Spreading-leaved earth moss)).